The primary structure comprises 693 residues: Transforming growth factor beta activator LRRC33 (693 aa).

Positions methionine 1–tryptophan 19 are cleaved as a signal peptide. Residues arginine 20–leucine 651 lie on the Extracellular side of the membrane. An LRRNT domain is found at alanine 29 to proline 56. 10 LRR repeats span residues histidine 58–alanine 79, arginine 82–glutamate 103, histidine 106–alanine 127, glycine 133–asparagine 155, serine 158–glycine 179, histidine 182–glycine 203, glutamate 206–glutamine 227, leucine 228–glutamate 239, glutamate 251–glycine 272, and lysine 273–serine 294. N-linked (GlcNAc...) asparagine glycosylation is found at asparagine 74 and asparagine 85. N-linked (GlcNAc...) asparagine glycosylation occurs at asparagine 155. Asparagine 232 carries an N-linked (GlcNAc...) asparagine glycan. Asparagine 292, asparagine 309, and asparagine 312 each carry an N-linked (GlcNAc...) asparagine glycan. LRR repeat units follow at residues alanine 329–lysine 350, serine 353–proline 374, alanine 377–threonine 398, asparagine 403–asparagine 424, serine 427–aspartate 448, serine 463–glycine 484, serine 486–tryptophan 507, threonine 512–serine 533, asparagine 537–leucine 558, alanine 559–glutamate 580, and glycine 585–glycine 605. 2 N-linked (GlcNAc...) asparagine glycosylation sites follow: asparagine 408 and asparagine 424. Asparagine 500 carries an N-linked (GlcNAc...) asparagine glycan. Residues alanine 606–tryptophan 644 form the LRRCT domain. An N-linked (GlcNAc...) asparagine glycan is attached at asparagine 623. Residues phenylalanine 652–phenylalanine 672 form a helical membrane-spanning segment. The Cytoplasmic segment spans residues leucine 673–tyrosine 693.

Belongs to the LRRC32/LRRC33 family. In terms of assembly, interacts with TGFB1; associates via disulfide bonds with the Latency-associated peptide chain (LAP) regulatory chain of TGFB1, leading to regulate activation of TGF-beta-1. Interacts (via LRR repeats) with TLR2, TLR3, TLR4, TLR9 and probably other Toll-like receptors. Interacts with CYBB/NOX2; the interaction is direct. In terms of processing, N-glycosylated. In terms of tissue distribution, mainly expressed in cells of hematopoietic origin, such as in immune organs such as lymph nodes, thymus and spleen. Among leukocytes, expressed at higher level in myeloid cell such as macrophages, neutrophils and dendritic cells. Highly expressed in central nervous system-resident macrophages, including microglia and perivascular macrophages.

Its subcellular location is the cell membrane. The protein resides in the endoplasmic reticulum membrane. In terms of biological role, key regulator of transforming growth factor beta-1 (TGFB1) specifically required for microglia function in the nervous system. Required for activation of latent TGF-beta-1 in macrophages and microglia: associates specifically via disulfide bonds with the Latency-associated peptide (LAP), which is the regulatory chain of TGFB1, and regulates integrin-dependent activation of TGF-beta-1. TGF-beta-1 activation mediated by LRRC33/NRROS is highly localized: there is little spreading of TGF-beta-1 activated from one microglial cell to neighboring microglia, suggesting the existence of localized and selective activation of TGF-beta-1 by LRRC33/NRROS. Indirectly plays a role in Toll-like receptor (TLR) signaling: ability to inhibit TLR-mediated NF-kappa-B activation and cytokine production is probably a consequence of its role in TGF-beta-1 signaling. The polypeptide is Transforming growth factor beta activator LRRC33 (Mus musculus (Mouse)).